The primary structure comprises 362 residues: Quinolone epoxide rearrangement protein penF (362 aa).

His-220 is a catalytic residue. Catalysis depends on Glu-222, which acts as the Broensted acid.

Belongs to the quinolone epoxide rearrangement protein penF family.

It carries out the reaction [(1'E)-5'-(3',3'-dimethyloxiran-2'-yl)-3'-hydroxy-3'-methylpent-1'-en-1'-yl]-quinolinone B = yaequinolone D. The protein operates within secondary metabolite biosynthesis. It participates in alkaloid biosynthesis. Its pathway is mycotoxin biosynthesis. Its function is as follows. Quinolone epoxide rearrangement protein; part of the gene cluster that mediates the biosynthesis of penigequinolones, potent insecticidal alkaloids that contain a highly modified 10-carbon prenyl group. The first stage is catalyzed by the nonribosomal peptide synthetase penN that condenses anthranilic acid and O-methyl-L-tyrosine to produce 4'-methoxycyclopeptin. 4'-methoxycyclopeptin is then converted to 4'-methoxydehydrocyclopeptin by the ketoglutarate-dependent dioxygenase penM through dehydrogenation to form a double bond between C-alpha and C-beta of the O-methyltyrosine side chain. PenM also converts its first product methoxydehydrocyclopeptin to 4'-methoxycyclopenin. The following conversion of 4'methoxycyclopenin into 4'-methoxyviridicatin is catalyzed by the cyclopenase penL. 4'-methoxyviridicatin is the precursor of quinolone natural products, and is further converted to quinolinone B. The prenyltransferase penI then catalyzes the canonical Friedel-Crafts alkylation of quinolinone B with dimethylallyl cation to yield dimethylallyl quinolone, which is subjected to FAD-dependent dehydrogenation by the FAD-linked oxidoreductase penH to yield conjugated aryl diene. The delta(3') double bond then serves as the site of the second alkylation with DMAPP catalyzed by the prenyltransferase penG to yield a carbenium ion intermediate, which can be attacked by H(2)O to yield a styrenyl quinolone containing a C3'-hydroxyprenyl chain, or undergo cyclization to yield yaequinolones J1 and J2. The conversion of the styrenyl quinolone into the tetrahydrofuran-containing yaequinolone C is performed by the FAD-dependent monooxygenase penE and involves epoxidation of the terminal C7'-C8' olefin, followed by epoxide ring opening initiated by the C3' hydroxyl group. The predicted cysteine hydrolase penJ acts as an epoxide hydrolase that enhances the rate of the 5-exo-tet cyclization step, increasing the yield of yaequinolone C. PenF catalyzes the cationic rearrangement of the epoxide formed by penE (before ring opening to produce yaequinolone C) into yaequinolone D. Finally, the short-chain dehydrogenase/reductase (SDR)-like reductase penD, catalyzes both the dehydration of yaequinolone D and the reduction of the resulting oxonium to yield penigequinolone. The sequence is that of Quinolone epoxide rearrangement protein penF from Penicillium thymicola.